Consider the following 430-residue polypeptide: Histidine--tRNA ligase (430 aa).

Belongs to the class-II aminoacyl-tRNA synthetase family. As to quaternary structure, homodimer.

It localises to the cytoplasm. The enzyme catalyses tRNA(His) + L-histidine + ATP = L-histidyl-tRNA(His) + AMP + diphosphate + H(+). In Chlorobium limicola (strain DSM 245 / NBRC 103803 / 6330), this protein is Histidine--tRNA ligase.